Here is a 101-residue protein sequence, read N- to C-terminus: NAD(P)H-quinone oxidoreductase subunit 4L, chloroplastic (101 aa).

Helical transmembrane passes span 2–22 (MLEYALVLSAFLFSIGIYGLI), 32–52 (MCLELILNAVNMNLVTFSYFF), and 61–81 (IFSIFIIAIAAAEAAIGLAIV).

This sequence belongs to the complex I subunit 4L family. NDH is composed of at least 16 different subunits, 5 of which are encoded in the nucleus.

It is found in the plastid. It localises to the chloroplast thylakoid membrane. It carries out the reaction a plastoquinone + NADH + (n+1) H(+)(in) = a plastoquinol + NAD(+) + n H(+)(out). It catalyses the reaction a plastoquinone + NADPH + (n+1) H(+)(in) = a plastoquinol + NADP(+) + n H(+)(out). In terms of biological role, NDH shuttles electrons from NAD(P)H:plastoquinone, via FMN and iron-sulfur (Fe-S) centers, to quinones in the photosynthetic chain and possibly in a chloroplast respiratory chain. The immediate electron acceptor for the enzyme in this species is believed to be plastoquinone. Couples the redox reaction to proton translocation, and thus conserves the redox energy in a proton gradient. The sequence is that of NAD(P)H-quinone oxidoreductase subunit 4L, chloroplastic from Ipomoea purpurea (Common morning glory).